A 344-amino-acid chain; its full sequence is Follistatin (344 aa).

Positions 1-29 are cleaved as a signal peptide; the sequence is MVRARHQPGGLCLLLLLLCQFMEDRSAQA. The region spanning 30–103 is the TB domain; it reads GNCWLRQAKN…TCENVDCGPG (74 aa). 18 disulfides stabilise this stretch: cysteine 32–cysteine 55, cysteine 42–cysteine 88, cysteine 56–cysteine 91, cysteine 95–cysteine 106, cysteine 100–cysteine 116, cysteine 118–cysteine 150, cysteine 122–cysteine 143, cysteine 132–cysteine 164, cysteine 168–cysteine 179, cysteine 173–cysteine 189, cysteine 192–cysteine 225, cysteine 196–cysteine 218, cysteine 207–cysteine 239, cysteine 245–cysteine 256, cysteine 250–cysteine 267, cysteine 270–cysteine 302, cysteine 274–cysteine 295, and cysteine 284–cysteine 316. One can recognise a Follistatin-like 1 domain in the interval 94 to 117; it reads TCENVDCGPGKKCRMNKKNKPRCV. A Kazal-like 1 domain is found at 112 to 166; the sequence is NKPRCVCAPDCSNITWKGPVCGLDGKTYRNECALLKARCKEQPELEVQYQGRCKK. The N-linked (GlcNAc...) asparagine glycan is linked to asparagine 124. One can recognise a Follistatin-like 2 domain in the interval 167 to 190; the sequence is TCRDVFCPGSSTCVVDQTNNAYCV. A Kazal-like 2 domain is found at 186-241; sequence NAYCVTCNRICPEPASSEQYLCGNDGVTYSSACHLRKATCLLGRSIGLAYEGKCIK. The Follistatin-like 3 domain occupies 244-268; sequence SCEDIQCTGGKKCLWDFKVGRGRCS. Residues 264–318 form the Kazal-like 3 domain; it reads RGRCSLCDELCPDSKSDEPVCASDNATYASECAMKEAACSSGVLLEVKHSGSCNS. An N-linked (GlcNAc...) asparagine glycan is attached at asparagine 288. The tract at residues 314–344 is disordered; that stretch reads GSCNSISEDTEEEEEDEDQDYSFPISSILEW. Over residues 321-333 the composition is skewed to acidic residues; that stretch reads EDTEEEEEDEDQD.

Interacts with GDF11. Interacts with activin A/INHBA. Interacts with MYOSTATIN/MSTN. As to expression, isoform 1 is the predominant isoform in serum but is undetectable in follicular fluid. In the embryo, strong expression is seen in the palatal epithelia, including the medial edge epithelial and midline epithelial seam of the palatal shelves. Less pronounced expression is also seen throughout the palatal shelf and tongue mesenchyme.

The protein localises to the secreted. Its subcellular location is the nucleus. It is found in the nucleolus. Its function is as follows. Multifunctional regulatory protein whose primary function is to antagonize members of the transforming growth factor beta (TGF-beta) superfamily including activin, myostatin, GDF11 or bone morphogenetic proteins (BMPs). Mechanistically, binds to these ligands in the extracellular space, blocking their type II receptor-binding site to inhibit downstream signaling. Plays an essential role in muscle fiber formation and growth both by preventing the repressive effects of myostatin and through SMAD3/AKT/mTOR signaling independently of myostatin. Also promotes neural differentiation by antagonizing the action BMP4. Acts as a specific inhibitor of the biosynthesis and secretion of pituitary follicle stimulating hormone (FSH) by sequestering activin A/INHBA. On the other hand, translocates into the nucleus where it down-regulates rRNA synthesis and ribosome biogenesis to maintain cellular energy homeostasis by binding to rDNA. The sequence is that of Follistatin from Homo sapiens (Human).